The following is a 356-amino-acid chain: Dihydroorotate dehydrogenase (quinone) (356 aa).

FMN contacts are provided by residues 66–70 (AGFDK) and Thr-90. Lys-70 contacts substrate. Substrate is bound at residue 115 to 119 (NRMGF). FMN-binding residues include Asn-143 and Asn-176. Asn-176 is a substrate binding site. Ser-179 acts as the Nucleophile in catalysis. Asn-181 provides a ligand contact to substrate. Lys-212 and Thr-240 together coordinate FMN. Position 241–242 (241–242 (NT)) interacts with substrate. FMN-binding positions include Gly-266, Gly-295, and 316–317 (YT).

This sequence belongs to the dihydroorotate dehydrogenase family. Type 2 subfamily. As to quaternary structure, monomer. FMN serves as cofactor.

It localises to the cell membrane. The catalysed reaction is (S)-dihydroorotate + a quinone = orotate + a quinol. The protein operates within pyrimidine metabolism; UMP biosynthesis via de novo pathway; orotate from (S)-dihydroorotate (quinone route): step 1/1. Its function is as follows. Catalyzes the conversion of dihydroorotate to orotate with quinone as electron acceptor. The sequence is that of Dihydroorotate dehydrogenase (quinone) from Rhodococcus opacus (strain B4).